Reading from the N-terminus, the 387-residue chain is 3-ketoacyl-CoA thiolase (387 aa).

C91 (acyl-thioester intermediate) is an active-site residue. Residues H343 and C373 each act as proton acceptor in the active site.

Belongs to the thiolase-like superfamily. Thiolase family. In terms of assembly, heterotetramer of two alpha chains (FadB) and two beta chains (FadA).

The protein resides in the cytoplasm. It catalyses the reaction an acyl-CoA + acetyl-CoA = a 3-oxoacyl-CoA + CoA. The protein operates within lipid metabolism; fatty acid beta-oxidation. Its function is as follows. Catalyzes the final step of fatty acid oxidation in which acetyl-CoA is released and the CoA ester of a fatty acid two carbons shorter is formed. The protein is 3-ketoacyl-CoA thiolase of Shewanella sp. (strain MR-7).